The sequence spans 307 residues: Myeloid-associated differentiation marker-like protein 2 (307 aa).

MARVEL domains lie at 17–154 and 159–303; these read AVTS…ARPG and YMAT…RIRF. The next 7 helical transmembrane spans lie at 53–73, 90–110, 129–149, 163–183, 198–218, 229–249, and 278–298; these read FCMAAWGFCFAVSALVVACEF, AFAMLATLLCATAAVLYPLYF, LAASVFAGLLFLAYAVEVALT, VSGLLKIVQAFVACIIFGALV, VAVYSLCFLATVAVVALSVMG, RLVVVYTFLAVLLYLSAAVIW, and LVVAIFTYVNLLLYVVDLAYS.

It belongs to the MAL family.

The protein localises to the membrane. The chain is Myeloid-associated differentiation marker-like protein 2 (MYADML2) from Homo sapiens (Human).